The sequence spans 366 residues: RNA 3'-terminal phosphate cyclase (366 aa).

Residues glutamine 104, proline 131, tyrosine 294, aspartate 297, glutamine 298, and histidine 320 each contribute to the ATP site. Histidine 320 acts as the Tele-AMP-histidine intermediate in catalysis.

The protein belongs to the RNA 3'-terminal cyclase family. Type 1 subfamily.

The protein localises to the nucleus. Its subcellular location is the nucleoplasm. The catalysed reaction is a 3'-end 3'-phospho-ribonucleotide-RNA + ATP = a 3'-end 2',3'-cyclophospho-ribonucleotide-RNA + AMP + diphosphate. Catalyzes the conversion of 3'-phosphate to a 2',3'-cyclic phosphodiester at the end of RNA. The mechanism of action of the enzyme occurs in 3 steps: (A) adenylation of the enzyme by ATP; (B) transfer of adenylate to an RNA-N3'P to produce RNA-N3'PP5'A; (C) and attack of the adjacent 2'-hydroxyl on the 3'-phosphorus in the diester linkage to produce the cyclic end product. Likely functions in some aspects of cellular RNA processing. Function plays an important role in regulating axon regeneration by inhibiting central nervous system (CNS) axon regeneration following optic nerve injury. This Bos taurus (Bovine) protein is RNA 3'-terminal phosphate cyclase (RTCA).